Consider the following 237-residue polypeptide: Cyclic-di-GMP-binding biofilm dispersal mediator protein (237 aa).

Residue 10–34 coordinates NAD(+); it reads LILGGSRGIGAAIVRRFVTDGANVR. Residue serine 132 participates in substrate binding. Tyrosine 146 (proton acceptor) is an active-site residue.

Belongs to the short-chain dehydrogenases/reductases (SDR) family.

Its function is as follows. Increases biofilm dispersal. Acts by binding directly to the signaling molecule cyclic-di-GMP, which decreases the intracellular concentration of cyclic-di-GMP and leads to biofilm dispersal. Also controls other biofilm-related phenotypes such as cell motility, cell size, cell aggregation and production of extracellular DNA and extracellular polysaccharides (EPS). Does not act as a phosphodiesterase. This is Cyclic-di-GMP-binding biofilm dispersal mediator protein (bdcA) from Escherichia coli (strain K12).